The chain runs to 150 residues: 3-dehydroquinate dehydratase (150 aa).

Y26 functions as the Proton acceptor in the catalytic mechanism. Substrate is bound by residues N77, H83, and D90. H103 (proton donor) is an active-site residue. Substrate is bound by residues 104 to 105 (LS) and R114.

The protein belongs to the type-II 3-dehydroquinase family. As to quaternary structure, homododecamer.

The catalysed reaction is 3-dehydroquinate = 3-dehydroshikimate + H2O. It participates in metabolic intermediate biosynthesis; chorismate biosynthesis; chorismate from D-erythrose 4-phosphate and phosphoenolpyruvate: step 3/7. Its function is as follows. Catalyzes a trans-dehydration via an enolate intermediate. The sequence is that of 3-dehydroquinate dehydratase from Enterobacter sp. (strain 638).